Reading from the N-terminus, the 252-residue chain is 3-deoxy-manno-octulosonate cytidylyltransferase (252 aa).

Belongs to the KdsB family.

It is found in the cytoplasm. It carries out the reaction 3-deoxy-alpha-D-manno-oct-2-ulosonate + CTP = CMP-3-deoxy-beta-D-manno-octulosonate + diphosphate. It participates in nucleotide-sugar biosynthesis; CMP-3-deoxy-D-manno-octulosonate biosynthesis; CMP-3-deoxy-D-manno-octulosonate from 3-deoxy-D-manno-octulosonate and CTP: step 1/1. It functions in the pathway bacterial outer membrane biogenesis; lipopolysaccharide biosynthesis. Activates KDO (a required 8-carbon sugar) for incorporation into bacterial lipopolysaccharide in Gram-negative bacteria. This is 3-deoxy-manno-octulosonate cytidylyltransferase from Thiobacillus denitrificans (strain ATCC 25259 / T1).